The primary structure comprises 269 residues: Small ribosomal subunit protein uS2 (269 aa).

Residues 228-269 (QLDSDDDYEEFDESLAEGDYDDYDEEEDEDSETVSSQEGEEE) are disordered. A compositionally biased stretch (acidic residues) spans 230 to 269 (DSDDDYEEFDESLAEGDYDDYDEEEDEDSETVSSQEGEEE).

This sequence belongs to the universal ribosomal protein uS2 family.

The chain is Small ribosomal subunit protein uS2 from Crocosphaera subtropica (strain ATCC 51142 / BH68) (Cyanothece sp. (strain ATCC 51142)).